The chain runs to 541 residues: Tripeptidyl aminopeptidase (541 aa).

A signal peptide spans 1 to 36 (MRKSSIRRRATAFGTAGALVTATLIAGAVSAPAASA). A propeptide spanning residues 37-39 (APA) is cleaved from the precursor. Residues 123-501 (GALIYNPGGP…SRLITERDAG (379 aa)) form the AB hydrolase-1 domain. Serine 249 acts as the Nucleophile in catalysis. The active site involves aspartate 474. Catalysis depends on histidine 503, which acts as the Proton donor.

It belongs to the peptidase S33 family.

Its subcellular location is the secreted. Functionally, cleaves tripeptides from the N-termini of proteins. Does not cleave mono- or dipeptides, or N-terminally blocked peptides. In Streptomyces coelicolor (strain ATCC BAA-471 / A3(2) / M145), this protein is Tripeptidyl aminopeptidase.